The primary structure comprises 162 residues: Interleukin-15 (162 aa).

A signal peptide spans 1–29 (MRILKPYLRSTSIQCYLCLLLNSHFLTEA). A propeptide spanning residues 30–48 (GIHVFILGCISASLPKTEA) is cleaved from the precursor. 2 cysteine pairs are disulfide-bonded: cysteine 83/cysteine 133 and cysteine 90/cysteine 136. Asparagine 104, asparagine 113, asparagine 121, and asparagine 127 each carry an N-linked (GlcNAc...) asparagine glycan.

Belongs to the IL-15/IL-21 family.

It is found in the secreted. Cytokine that plays a major role in the development of inflammatory and protective immune responses to microbial invaders and parasites by modulating immune cells of both the innate and adaptive immune systems. Stimulates the proliferation of natural killer cells, T-cells and B-cells and promotes the secretion of several cytokines. In monocytes, induces the production of IL8 and monocyte chemotactic protein 1/CCL2, two chemokines that attract neutrophils and monocytes respectively to sites of infection. Unlike most cytokines, which are secreted in soluble form, IL15 is expressed in association with its high affinity IL15RA on the surface of IL15-producing cells and delivers signals to target cells that express IL2RB and IL2RG receptor subunits. Binding to its receptor triggers the phosphorylation of JAK1 and JAK3 and the recruitment and subsequent phosphorylation of signal transducer and activator of transcription-3/STAT3 and STAT5. In mast cells, induces the rapid tyrosine phosphorylation of STAT6 and thereby controls mast cell survival and release of cytokines such as IL4. The chain is Interleukin-15 (IL15) from Bos taurus (Bovine).